Consider the following 580-residue polypeptide: Probable glucomannan 4-beta-mannosyltransferase 2 (580 aa).

The span at 1-12 (MSTNGGAPSQKR) shows a compositional bias: polar residues. Positions 1-33 (MSTNGGAPSQKRSWLPSRPLLTTTTQTYPPPLL) are disordered. The span at 15–27 (LPSRPLLTTTTQT) shows a compositional bias: low complexity. Residues 85–105 (AVWACLAMSAMLVAEAAWMGL) form a helical membrane-spanning segment. Aspartate 182 is a catalytic residue. Aspartate 241 and aspartate 243 together coordinate substrate. Aspartate 335 is an active-site residue. 4 helical membrane passes run 414-434 (AIAP…SAMV), 437-457 (VTIP…MNAI), 528-548 (IYIP…YDFV), and 554-574 (YYIY…GFVG).

It belongs to the glycosyltransferase 2 family. Plant cellulose synthase-like A subfamily.

The protein localises to the golgi apparatus membrane. It carries out the reaction GDP-mannose + (glucomannan)n = GDP + (glucomannan)n+1.. Its function is as follows. Probable mannan synthase which consists of a 4-beta-mannosyltransferase activity on mannan using GDP-mannose. The beta-1,4-mannan product is the backbone for galactomannan synthesis by galactomannan galactosyltransferase. Galactomannan is a noncellulosic polysaccharides of plant cell wall. This Oryza sativa subsp. japonica (Rice) protein is Probable glucomannan 4-beta-mannosyltransferase 2.